We begin with the raw amino-acid sequence, 995 residues long: Secreted protein CSS1 (995 aa).

Positions 1–23 (MFNRLNKFQAALALALYSQSALG) are cleaved as a signal peptide. The Methyl-accepting transducer domain maps to 26 to 253 (YSNSTSISSN…GVSSSGSQSV (228 aa)). N-linked (GlcNAc...) asparagine glycans are attached at residues Asn28 and Asn35. Residues 98–276 (SSSSVSDVSS…TSSASTASGS (179 aa)) are disordered. Residues Asn468 and Asn664 are each glycosylated (N-linked (GlcNAc...) asparagine).

Belongs to the SRP1/TIP1 family.

The protein resides in the secreted. Functionally, secreted protein that may be involved in cell wall organization and biosynthesis. This is Secreted protein CSS1 from Saccharomyces cerevisiae (strain ATCC 204508 / S288c) (Baker's yeast).